The chain runs to 344 residues: uncharacterized protein (344 aa).

A disordered region spans residues 95–344 (TINPEDANED…TPAKKNSKGR (250 aa)). Over residues 103–123 (EDAKVKNSLKLEKEEGSDEKS) the composition is skewed to basic and acidic residues. The segment covering 135–155 (SDDESDNSNDSEESEAEDSDQ) has biased composition (acidic residues). Residues 191–200 (SAKNAKASKP) are compositionally biased toward low complexity. A compositionally biased stretch (acidic residues) spans 244 to 259 (SEDEDSGSDNSEEESE). A compositionally biased stretch (basic residues) spans 265 to 276 (ASSKKPPSKSSK). The span at 281 to 314 (EDEDEDSGQSESEHSEEESNSDEDSGQSEEESEE) shows a compositional bias: acidic residues. Positions 331–344 (TAKKTPAKKNSKGR) are enriched in basic residues.

This is an uncharacterized protein from Acanthamoeba polyphaga (Amoeba).